An 882-amino-acid polypeptide reads, in one-letter code: Valine--tRNA ligase (882 aa).

The 'HIGH' region signature appears at 48 to 58; the sequence is PNVTGKLHLGH. The 'KMSKS' region signature appears at 524–528; sequence KMSKS. Lys-527 is a binding site for ATP. Residues 809-882 adopt a coiled-coil conformation; that stretch reads LAELLDLDEE…KRLAELKAAR (74 aa). A disordered region spans residues 844-866; that stretch reads GFTDRAPEKVVQEERDKQADYEQ. Basic and acidic residues predominate over residues 845 to 863; it reads FTDRAPEKVVQEERDKQAD.

The protein belongs to the class-I aminoacyl-tRNA synthetase family. ValS type 1 subfamily. Monomer.

The protein localises to the cytoplasm. The catalysed reaction is tRNA(Val) + L-valine + ATP = L-valyl-tRNA(Val) + AMP + diphosphate. In terms of biological role, catalyzes the attachment of valine to tRNA(Val). As ValRS can inadvertently accommodate and process structurally similar amino acids such as threonine, to avoid such errors, it has a 'posttransfer' editing activity that hydrolyzes mischarged Thr-tRNA(Val) in a tRNA-dependent manner. The sequence is that of Valine--tRNA ligase from Latilactobacillus sakei subsp. sakei (strain 23K) (Lactobacillus sakei subsp. sakei).